The sequence spans 148 residues: Augurin (148 aa).

The N-terminal stretch at 1 to 31 (MSTSSARPAVLALAGLALLLLLCLGPDGISG) is a signal peptide. 2 propeptides span residues 32 to 70 (NKLK…RAKR) and 133 to 148 (SRES…YNDY).

Belongs to the augurin family. In terms of tissue distribution, expressed in the intermediate lobe of pituitary, glomerular layer of adrenal cortex, choroid plexus and atrioventricular node of the heart. Expressed in the brain with high expression in the choroid plexus and the epithelial lining of the central canal and expression in the gray matter of the spinal cord (at protein level).

The protein localises to the secreted. The protein resides in the cytoplasm. Its subcellular location is the apical cell membrane. In terms of biological role, probable hormone that may attenuate cell proliferation and induce senescence of oligodendrocyte and neural precursor cells in the central nervous system. ECRG4-induced senescence is characterized by G1 arrest, RB1 dephosphorylation and accelerated CCND1 and CCND3 proteasomal degradation. This Mus musculus (Mouse) protein is Augurin.